We begin with the raw amino-acid sequence, 608 residues long: MSYSSASFRKLNNVGISQPSQTTTTTTSANQPQSQSQQQPLQQSQQQHLHMKPNPHIPHHQLPGTVGTRTSIPQPALMASNSILTLGPFKHRKDLTRESVLSTYQIMGYIAAGTYGKVYKAKLKSNKLNKTDDDSGIDGINNKDIFSESMNDLHHDNSSSIMINTTTNITINNSLPQFFAIKKFKSDNHHHHINNNNNGGNHLSKGNNSIHQDEVLHYTGISQSAIREMSLCRELNNKNITKLVDIILENKSIYMVFEFCEHDLLQIIHYQSHPDFKPIPCPTIKSLIWQILNGVTFLHKNWILHRDLKPANIMVSSQGVVKIGDLGLARKFKSPLQSLYTGDKVVVTIWYRAPELLLGTRHYTPAVDLWAVGCILAELLSLRPIFKGEEAKIDLNNKKSVPFQKNQLQKIIEILGTPTTDIWNNLNKYPEYLSFTQHFNQNYPNNLSNWFKLINGGNNQNSEKCLELLSGLLKYDPELRLTADQALLHPYFLELPKVNENAFEGLNYKYPNRKIYTDDNDIMTTAANNNNNNNNNNNNNNNNNNNNNNNNNNNSGHQLSQQQNVQIQQVHQMQQQIHSQQLQSHGANSTYKRSGIDDLPGGIRKKRG.

The tract at residues 1–72 (MSYSSASFRK…PGTVGTRTSI (72 aa)) is disordered. A compositionally biased stretch (low complexity) spans 17–47 (SQPSQTTTTTTSANQPQSQSQQQPLQQSQQQ). Residues 49–59 (LHMKPNPHIPH) show a composition bias toward basic residues. The Protein kinase domain maps to 104–492 (YQIMGYIAAG…ADQALLHPYF (389 aa)). Residues 110–118 (IAAGTYGKV) and Lys182 contribute to the ATP site. The active-site Proton acceptor is the Asp307. The segment at 523-608 (MTTAANNNNN…LPGGIRKKRG (86 aa)) is disordered. Low complexity predominate over residues 528–583 (NNNNNNNNNNNNNNNNNNNNNNNNNNNSGHQLSQQQNVQIQQVHQMQQQIHSQQLQ).

The protein belongs to the protein kinase superfamily. CMGC Ser/Thr protein kinase family. CDC2/CDKX subfamily. In terms of assembly, component of the SRB8-11 complex, a regulatory module of the Mediator complex. Requires Mg(2+) as cofactor.

The protein resides in the nucleus. The enzyme catalyses L-seryl-[protein] + ATP = O-phospho-L-seryl-[protein] + ADP + H(+). It carries out the reaction L-threonyl-[protein] + ATP = O-phospho-L-threonyl-[protein] + ADP + H(+). It catalyses the reaction [DNA-directed RNA polymerase] + ATP = phospho-[DNA-directed RNA polymerase] + ADP + H(+). Its function is as follows. Component of the SRB8-11 complex. The SRB8-11 complex is a regulatory module of the Mediator complex which is itself involved in regulation of basal and activated RNA polymerase II-dependent transcription. The SRB8-11 complex may be involved in the transcriptional repression of a subset of genes regulated by Mediator. It may inhibit the association of the Mediator complex with RNA polymerase II to form the holoenzyme complex. The SRB8-11 complex phosphorylates the C-terminal domain (CTD) of the largest subunit of RNA polymerase II. The chain is Serine/threonine-protein kinase SSN3 (SSN3) from Candida albicans (strain SC5314 / ATCC MYA-2876) (Yeast).